The primary structure comprises 145 residues: Ribonuclease VapC7 (145 aa).

In terms of domain architecture, PINc spans Ile-2–Val-129. Mg(2+) is bound by residues Asp-5 and Asp-100.

The protein belongs to the PINc/VapC protein family. The cofactor is Mg(2+).

Its function is as follows. Toxic component of a type II toxin-antitoxin (TA) system. An RNase. The cognate antitoxin is VapB7. In Mycobacterium tuberculosis (strain ATCC 25618 / H37Rv), this protein is Ribonuclease VapC7.